A 546-amino-acid chain; its full sequence is Chaperonin GroEL 2 (546 aa).

Residues 30-33 (TLGP), Lys51, 87-91 (DGTTT), Gly415, and Asp495 each bind ATP. Residues 527 to 546 (DAAPATAPGGPGAGGPGFDF) are disordered. Positions 535–546 (GGPGAGGPGFDF) are enriched in gly residues.

This sequence belongs to the chaperonin (HSP60) family. Forms a cylinder of 14 subunits composed of two heptameric rings stacked back-to-back. Interacts with the co-chaperonin GroES.

The protein localises to the cytoplasm. The enzyme catalyses ATP + H2O + a folded polypeptide = ADP + phosphate + an unfolded polypeptide.. In terms of biological role, together with its co-chaperonin GroES, plays an essential role in assisting protein folding. The GroEL-GroES system forms a nano-cage that allows encapsulation of the non-native substrate proteins and provides a physical environment optimized to promote and accelerate protein folding. This is Chaperonin GroEL 2 from Burkholderia ambifaria (strain ATCC BAA-244 / DSM 16087 / CCUG 44356 / LMG 19182 / AMMD) (Burkholderia cepacia (strain AMMD)).